The following is a 101-amino-acid chain: Large ribosomal subunit protein uL23 (101 aa).

Belongs to the universal ribosomal protein uL23 family. Part of the 50S ribosomal subunit. Contacts protein L29, and trigger factor when it is bound to the ribosome.

In terms of biological role, one of the early assembly proteins it binds 23S rRNA. One of the proteins that surrounds the polypeptide exit tunnel on the outside of the ribosome. Forms the main docking site for trigger factor binding to the ribosome. This is Large ribosomal subunit protein uL23 from Tolumonas auensis (strain DSM 9187 / NBRC 110442 / TA 4).